Consider the following 150-residue polypeptide: Ribonuclease K6 (150 aa).

Residues 1–23 form the signal peptide; it reads MVLCFPLLLLLLVLWGPVCPLHA. H38 (proton acceptor) is an active-site residue. 4 cysteine pairs are disulfide-bonded: C46–C104, C60–C114, C78–C129, and C85–C92. Residues 61 to 65 and K86 contribute to the substrate site; that span reads KHQNT. N-linked (GlcNAc...) asparagine glycosylation occurs at N100. R105 is a binding site for substrate. The active-site Proton donor is H145.

Belongs to the pancreatic ribonuclease family. As to quaternary structure, interacts (via N-terminus) with bacterial lipopolysaccharide (LPS).

The protein resides in the secreted. The protein localises to the lysosome. It localises to the cytoplasmic granule. In terms of biological role, ribonuclease which shows a preference for the pyrimidines uridine and cytosine. Has potent antibacterial activity against a range of Gram-positive and Gram-negative bacteria, including P.aeruginosa, A.baumanii, M.luteus, S.aureus, E.faecalis, E.faecium, S.saprophyticus and E.coli. Causes loss of bacterial membrane integrity, and also promotes agglutination of Gram-negative bacteria. Probably contributes to urinary tract sterility. Bactericidal activity is independent of RNase activity. This chain is Ribonuclease K6 (RNASE6), found in Pan troglodytes (Chimpanzee).